The chain runs to 932 residues: Probable UDP-N-acetylglucosamine--peptide N-acetylglucosaminyltransferase SPINDLY (932 aa).

A compositionally biased stretch (basic and acidic residues) spans 1–15 (MAWTEKDVENGKESD). The interval 1 to 39 (MAWTEKDVENGKESDSLGNNGFLKGVQSSSDSKGSPVRI) is disordered. 11 TPR repeats span residues 48 to 81 (GKDA…DSGS), 82 to 115 (IESL…DPQN), 116 to 149 (ACAL…DPSY), 157 to 190 (AIVL…DSHY), 191 to 224 (APAY…RPMY), 225 to 258 (AEAY…SPNF), 266 to 299 (AIAL…NWHY), 300 to 333 (ADAM…NPHC), 334 to 367 (AEAC…KPNF), 369 to 401 (QSLN…NPTY), and 402 to 435 (AEAY…DPDS). The interval 436-932 (RNAGQNRLLA…NQAGNPGKQS (497 aa)) is catalytic region. The segment at 881-902 (VSPIEKTRISASKDGPIKENGF) is disordered.

It belongs to the glycosyltransferase 41 family. O-GlcNAc transferase subfamily. Expressed in stems, leaves and flowers. Expressed during all stages of corolla maturation.

It localises to the nucleus. The catalysed reaction is L-seryl-[protein] + UDP-N-acetyl-alpha-D-glucosamine = 3-O-(N-acetyl-beta-D-glucosaminyl)-L-seryl-[protein] + UDP + H(+). The enzyme catalyses L-threonyl-[protein] + UDP-N-acetyl-alpha-D-glucosamine = 3-O-(N-acetyl-beta-D-glucosaminyl)-L-threonyl-[protein] + UDP + H(+). The protein operates within protein modification; protein glycosylation. Functionally, probable O-linked N-acetylglucosamine transferase (OGT) involved in various processes such as gibberellin (GA) signaling pathway. OGTs catalyze the addition of nucleotide-activated sugars directly onto the polypeptide through O-glycosidic linkage with the hydroxyl of serine or threonine. Probably acts by adding O-linked sugars to yet unknown proteins. The chain is Probable UDP-N-acetylglucosamine--peptide N-acetylglucosaminyltransferase SPINDLY (SPY) from Petunia hybrida (Petunia).